The following is a 305-amino-acid chain: MSTIGYIGASICLLGVLSSLFSISHIVRDINSLRDEVEGRVDEFKVLADDTWQRLLVLQSPTGETENVMPSIFRSKRFVYPGMCNCDSNSQGCPAGPPGPPGLPGKRGDEGVVGDLGRSGASGISLAAVHHIPGGCINCPAGPAGPPGQQGPVGPQGFPGVVGTCGPSGDDGQPGPAGPLGDKGAQGPKGFDGADGPDGMPGTAYFPGAVGQPGEPGWLGQPGLPGKHGEPGQDGEEGPKGAPGTPGSNGRDAYPGQPGKAGEPGAVGKDANYCPCPARRDSKTESVHEPPAASQNGGYRKAKRH.

Disordered stretches follow at residues Ala-95–Gly-117 and Pro-146–His-305. 4 triple-helical region regions span residues Gly-96–Ser-125, Gly-142–Ala-204, Gly-208–Asp-252, and Gly-256–Asp-270. A compositionally biased stretch (low complexity) spans Gln-150–Val-162. Over residues Ala-278–His-288 the composition is skewed to basic and acidic residues.

It belongs to the cuticular collagen family. Collagen polypeptide chains are complexed within the cuticle by disulfide bonds and other types of covalent cross-links.

Nematode cuticles are composed largely of collagen-like proteins. The cuticle functions both as an exoskeleton and as a barrier to protect the worm from its environment. The chain is Putative cuticle collagen 90 (col-90) from Caenorhabditis elegans.